The following is a 688-amino-acid chain: Potassium-transporting ATPase ATP-binding subunit (688 aa).

The next 4 helical transmembrane spans lie at 35–55, 62–82, 219–239, and 260–280; these read VMFV…QALG, AGFI…ANFA, IALT…IVTL, and VLIA…LSAI. The 4-aspartylphosphate intermediate role is filled by aspartate 313. ATP is bound by residues aspartate 350, glutamate 354, 383–390, and lysine 401; that span reads FSAHTRMS. 2 residues coordinate Mg(2+): aspartate 524 and aspartate 528. 3 helical membrane-spanning segments follow: residues 594 to 614, 622 to 642, and 668 to 688; these read FAII…LNVM, AILS…PLAL, and VIVP…VGLA.

Belongs to the cation transport ATPase (P-type) (TC 3.A.3) family. Type IA subfamily. The system is composed of three essential subunits: KdpA, KdpB and KdpC.

It localises to the cell inner membrane. It catalyses the reaction K(+)(out) + ATP + H2O = K(+)(in) + ADP + phosphate + H(+). Functionally, part of the high-affinity ATP-driven potassium transport (or Kdp) system, which catalyzes the hydrolysis of ATP coupled with the electrogenic transport of potassium into the cytoplasm. This subunit is responsible for energy coupling to the transport system and for the release of the potassium ions to the cytoplasm. This chain is Potassium-transporting ATPase ATP-binding subunit, found in Dechloromonas aromatica (strain RCB).